The sequence spans 460 residues: 3-isopropylmalate dehydratase large subunit (460 aa).

3 residues coordinate [4Fe-4S] cluster: C341, C401, and C404.

This sequence belongs to the aconitase/IPM isomerase family. LeuC type 1 subfamily. As to quaternary structure, heterodimer of LeuC and LeuD. It depends on [4Fe-4S] cluster as a cofactor.

It catalyses the reaction (2R,3S)-3-isopropylmalate = (2S)-2-isopropylmalate. Its pathway is amino-acid biosynthesis; L-leucine biosynthesis; L-leucine from 3-methyl-2-oxobutanoate: step 2/4. In terms of biological role, catalyzes the isomerization between 2-isopropylmalate and 3-isopropylmalate, via the formation of 2-isopropylmaleate. This Phocaeicola vulgatus (strain ATCC 8482 / DSM 1447 / JCM 5826 / CCUG 4940 / NBRC 14291 / NCTC 11154) (Bacteroides vulgatus) protein is 3-isopropylmalate dehydratase large subunit.